The following is a 417-amino-acid chain: Tyrosine--tRNA ligase (417 aa).

Residue tyrosine 34 coordinates L-tyrosine. Residues 39 to 48 carry the 'HIGH' region motif; that stretch reads PSGDSLHIGH. Positions 165 and 169 each coordinate L-tyrosine. The 'KMSKS' region signature appears at 227-231; that stretch reads KFGKT. An ATP-binding site is contributed by lysine 230. In terms of domain architecture, S4 RNA-binding spans 349–415; that stretch reads ANIVDWLVDT…GKKNYTLAKV (67 aa).

Belongs to the class-I aminoacyl-tRNA synthetase family. TyrS type 1 subfamily. In terms of assembly, homodimer.

The protein resides in the cytoplasm. The catalysed reaction is tRNA(Tyr) + L-tyrosine + ATP = L-tyrosyl-tRNA(Tyr) + AMP + diphosphate + H(+). Catalyzes the attachment of tyrosine to tRNA(Tyr) in a two-step reaction: tyrosine is first activated by ATP to form Tyr-AMP and then transferred to the acceptor end of tRNA(Tyr). The chain is Tyrosine--tRNA ligase from Limosilactobacillus fermentum (strain NBRC 3956 / LMG 18251) (Lactobacillus fermentum).